The primary structure comprises 436 residues: GTPase Der (436 aa).

EngA-type G domains are found at residues 4 to 167 (PIVA…KEEE) and 176 to 351 (IRLS…ENHK). Residues 10 to 17 (GRPNVGKS), 57 to 61 (DTGGI), 119 to 122 (NKVD), 182 to 189 (GRPNVGKS), 229 to 233 (DTAGM), and 294 to 297 (NKWD) each bind GTP. A KH-like domain is found at 352 to 436 (KRVQSSTLNE…PVHIIARKRN (85 aa)).

It belongs to the TRAFAC class TrmE-Era-EngA-EngB-Septin-like GTPase superfamily. EngA (Der) GTPase family. As to quaternary structure, associates with the 50S ribosomal subunit.

Functionally, GTPase that plays an essential role in the late steps of ribosome biogenesis. This chain is GTPase Der, found in Staphylococcus saprophyticus subsp. saprophyticus (strain ATCC 15305 / DSM 20229 / NCIMB 8711 / NCTC 7292 / S-41).